We begin with the raw amino-acid sequence, 348 residues long: Major outer membrane protein (348 aa).

Positions 1-20 (MKKTIVALAVAAVAATSANA) are cleaved as a signal peptide.

As to quaternary structure, disulfide bond interactions within and between MOMP molecules and other components form high molecular-weight oligomers.

Its subcellular location is the cell outer membrane. Functionally, structural rigidity of the outer membrane of elementary bodies and porin forming, permitting diffusion of solutes through the intracellular reticulate body membrane. This is Major outer membrane protein (ompH) from Pasteurella multocida (strain Pm70).